A 628-amino-acid polypeptide reads, in one-letter code: Phosphomethylpyrimidine synthase (628 aa).

The span at 1–14 shows a compositional bias: polar residues; sequence MTISDIGSQATTHT. The disordered stretch occupies residues 1–37; sequence MTISDIGSQATTHTPVKASKADALKTPAHRSETDARF. Basic and acidic residues predominate over residues 19-37; that stretch reads SKADALKTPAHRSETDARF. Substrate contacts are provided by residues Asn-260, Met-289, Tyr-318, His-354, 374–376, 415–418, and Glu-454; these read SRG and DGLR. His-458 serves as a coordination point for Zn(2+). A substrate-binding site is contributed by Tyr-481. His-522 is a binding site for Zn(2+). Cys-602, Cys-605, and Cys-610 together coordinate [4Fe-4S] cluster.

The protein belongs to the ThiC family. As to quaternary structure, homodimer. The cofactor is [4Fe-4S] cluster.

The enzyme catalyses 5-amino-1-(5-phospho-beta-D-ribosyl)imidazole + S-adenosyl-L-methionine = 4-amino-2-methyl-5-(phosphooxymethyl)pyrimidine + CO + 5'-deoxyadenosine + formate + L-methionine + 3 H(+). It participates in cofactor biosynthesis; thiamine diphosphate biosynthesis. Functionally, catalyzes the synthesis of the hydroxymethylpyrimidine phosphate (HMP-P) moiety of thiamine from aminoimidazole ribotide (AIR) in a radical S-adenosyl-L-methionine (SAM)-dependent reaction. This is Phosphomethylpyrimidine synthase from Psychrobacter cryohalolentis (strain ATCC BAA-1226 / DSM 17306 / VKM B-2378 / K5).